We begin with the raw amino-acid sequence, 1740 residues long: DNA polymerase (1740 aa).

The segment at 472-491 (IEMPHNQEDSDSEKEDEDTD) is disordered. Residues 480–491 (DSDSEKEDEDTD) are compositionally biased toward acidic residues. In terms of domain architecture, DOD-type homing endonuclease spans 1189 to 1334 (VWGFFMGDGS…LFYLLKSLGY (146 aa)). A disordered region spans residues 1673-1701 (PKESGSKTAKKPYQSQKLQKTKSSNKSQI). Positions 1685-1700 (YQSQKLQKTKSSNKSQ) are enriched in polar residues.

Belongs to the DNA polymerase type-B family. Post-translationally, this protein undergoes a protein self splicing that involves a post-translational excision of the intervening region (intein) followed by peptide ligation.

The catalysed reaction is DNA(n) + a 2'-deoxyribonucleoside 5'-triphosphate = DNA(n+1) + diphosphate. The chain is DNA polymerase (POLB) from Acanthamoeba polyphaga (Amoeba).